We begin with the raw amino-acid sequence, 339 residues long: Putative pectinesterase 10 (339 aa).

The signal sequence occupies residues 1 to 28 (MKGVTIHNFCYSYFKVCLLVMSLAYGSA). Asn-112 carries an N-linked (GlcNAc...) asparagine glycan. Position 116 (Thr-116) interacts with substrate. Catalysis depends on Asp-169, which acts as the Proton donor. Asp-190 (nucleophile) is an active-site residue. Residues Arg-252 and Trp-254 each contribute to the substrate site. The N-linked (GlcNAc...) asparagine glycan is linked to Asn-322.

This sequence belongs to the pectinesterase family. As to expression, expressed in siliques.

Its subcellular location is the secreted. It is found in the cell wall. The enzyme catalyses [(1-&gt;4)-alpha-D-galacturonosyl methyl ester](n) + n H2O = [(1-&gt;4)-alpha-D-galacturonosyl](n) + n methanol + n H(+). The protein operates within glycan metabolism; pectin degradation; 2-dehydro-3-deoxy-D-gluconate from pectin: step 1/5. Acts in the modification of cell walls via demethylesterification of cell wall pectin. This Arabidopsis thaliana (Mouse-ear cress) protein is Putative pectinesterase 10 (PME10).